The chain runs to 176 residues: 2-C-methyl-D-erythritol 2,4-cyclodiphosphate synthase (176 aa).

2 residues coordinate a divalent metal cation: Asp-22 and His-24. 4-CDP-2-C-methyl-D-erythritol 2-phosphate contacts are provided by residues 22–24 (DVH) and 48–49 (HS). Position 56 (His-56) interacts with a divalent metal cation. 4-CDP-2-C-methyl-D-erythritol 2-phosphate is bound by residues 70-72 (DIG), 146-149 (TTSE), Phe-153, and Arg-156.

The protein belongs to the IspF family. As to quaternary structure, homotrimer. A divalent metal cation serves as cofactor.

The enzyme catalyses 4-CDP-2-C-methyl-D-erythritol 2-phosphate = 2-C-methyl-D-erythritol 2,4-cyclic diphosphate + CMP. It functions in the pathway isoprenoid biosynthesis; isopentenyl diphosphate biosynthesis via DXP pathway; isopentenyl diphosphate from 1-deoxy-D-xylulose 5-phosphate: step 4/6. In terms of biological role, involved in the biosynthesis of isopentenyl diphosphate (IPP) and dimethylallyl diphosphate (DMAPP), two major building blocks of isoprenoid compounds. Catalyzes the conversion of 4-diphosphocytidyl-2-C-methyl-D-erythritol 2-phosphate (CDP-ME2P) to 2-C-methyl-D-erythritol 2,4-cyclodiphosphate (ME-CPP) with a corresponding release of cytidine 5-monophosphate (CMP). This Xylella fastidiosa (strain 9a5c) protein is 2-C-methyl-D-erythritol 2,4-cyclodiphosphate synthase.